We begin with the raw amino-acid sequence, 315 residues long: Protein sprouty homolog 2 (315 aa).

Residues 1 to 15 (MEARAQSGNGSQPLL) show a composition bias toward polar residues. Disordered stretches follow at residues 1 to 39 (MEARAQSGNGSQPLLQTPRDGGRQRGEPDPRDALTQQVH) and 51 to 140 (NTNE…GSSF). Residues 20–32 (DGGRQRGEPDPRD) are compositionally biased toward basic and acidic residues. Over residues 108–140 (SRSISTVSSGSRSSTRTSTSSSSSEQRLLGSSF) the composition is skewed to low complexity. Residues 118 to 315 (SRSSTRTSTS…VPPRNFEKPT (198 aa)) form a required for interaction with CAV1 region. The 115-residue stretch at 177–291 (RCEDCGKCKC…CYDRVNRPGC (115 aa)) folds into the SPR domain. Residues 178–315 (CEDCGKCKCK…VPPRNFEKPT (138 aa)) are required for interaction with TESK1.

It belongs to the sprouty family. As to quaternary structure, forms heterodimers with SPRY1. Forms a tripartite complex containing GAB1, METTL13 and SPRY2. Within the complex interacts with METTL13. Interacts with RAF1. Interacts (via C-terminus) with TESK1 (via C-terminus); the interaction disrupts SPRY2 interaction with GRB2, potentially via disruption of SPRY2 serine dephosphorylation. Interacts with PPP2R1A/PP2A-A and PPP2CA/PP2A-C; the interaction with PPP2CA/PP2A-C is inhibited by interaction with TESK1, possibly by vesicular sequestration of SPRY2. Inhibition of the interaction with the serine/threonine-protein phosphatase 2A (PP2A) holoenzyme results in loss of PP2A-mediated dephosphorylation, resulting in the loss of SPRY2 interaction with GRB2. Interacts with GRB2. Interacts with CBL/C-CBL; the interaction inhibits CBL-mediated ubiquitination of EGFR. Interacts (via C-terminus) with CAV1 (via C-terminus). In terms of processing, cleaved at Pro-144 by the prolyl endopeptidase FAP (seprase) activity (in vitro).

Its subcellular location is the cytoplasm. The protein localises to the cytoskeleton. It localises to the cell projection. It is found in the ruffle membrane. Functionally, antagonist of fibroblast growth factor (FGF) pathways via inhibition of FGF-mediated phosphorylation of ERK1/2. Thereby acts as an antagonist of FGF-induced retinal lens fiber differentiation, may inhibit limb bud outgrowth and may negatively modulate respiratory organogenesis. Inhibits TGFB-induced epithelial-to-mesenchymal transition in retinal lens epithelial cells. Inhibits CBL/C-CBL-mediated EGFR ubiquitination. This Macaca fascicularis (Crab-eating macaque) protein is Protein sprouty homolog 2 (SPRY2).